The chain runs to 302 residues: Succinate--CoA ligase [ADP-forming] subunit alpha (302 aa).

CoA contacts are provided by residues 17–20 (TGST), K43, and 96–98 (ITE). Residue Y159 participates in substrate binding. H247 acts as the Tele-phosphohistidine intermediate in catalysis.

The protein belongs to the succinate/malate CoA ligase alpha subunit family. Heterotetramer of two alpha and two beta subunits.

The catalysed reaction is succinate + ATP + CoA = succinyl-CoA + ADP + phosphate. It catalyses the reaction GTP + succinate + CoA = succinyl-CoA + GDP + phosphate. The protein operates within carbohydrate metabolism; tricarboxylic acid cycle; succinate from succinyl-CoA (ligase route): step 1/1. In terms of biological role, succinyl-CoA synthetase functions in the citric acid cycle (TCA), coupling the hydrolysis of succinyl-CoA to the synthesis of either ATP or GTP and thus represents the only step of substrate-level phosphorylation in the TCA. The alpha subunit of the enzyme binds the substrates coenzyme A and phosphate, while succinate binding and nucleotide specificity is provided by the beta subunit. This is Succinate--CoA ligase [ADP-forming] subunit alpha from Staphylococcus epidermidis (strain ATCC 35984 / DSM 28319 / BCRC 17069 / CCUG 31568 / BM 3577 / RP62A).